The following is a 351-amino-acid chain: Protein RecA (351 aa).

64-71 serves as a coordination point for ATP; it reads GPESSGKT. The interval 330-351 is disordered; that stretch reads DRFLQNGGPDPDDGDGDATAEM. The segment covering 339 to 351 has biased composition (acidic residues); the sequence is DPDDGDGDATAEM.

This sequence belongs to the RecA family.

The protein resides in the cytoplasm. In terms of biological role, can catalyze the hydrolysis of ATP in the presence of single-stranded DNA, the ATP-dependent uptake of single-stranded DNA by duplex DNA, and the ATP-dependent hybridization of homologous single-stranded DNAs. It interacts with LexA causing its activation and leading to its autocatalytic cleavage. This Rhizobium leguminosarum bv. viciae protein is Protein RecA.